A 172-amino-acid polypeptide reads, in one-letter code: Large ribosomal subunit protein uL10 (172 aa).

It belongs to the universal ribosomal protein uL10 family. As to quaternary structure, part of the ribosomal stalk of the 50S ribosomal subunit. The N-terminus interacts with L11 and the large rRNA to form the base of the stalk. The C-terminus forms an elongated spine to which L12 dimers bind in a sequential fashion forming a multimeric L10(L12)X complex.

Functionally, forms part of the ribosomal stalk, playing a central role in the interaction of the ribosome with GTP-bound translation factors. In Mesorhizobium japonicum (strain LMG 29417 / CECT 9101 / MAFF 303099) (Mesorhizobium loti (strain MAFF 303099)), this protein is Large ribosomal subunit protein uL10.